A 367-amino-acid polypeptide reads, in one-letter code: MDHVKLVNDPIDIAHIHQLLADEGCGASSVFVGTTRDNFQGKKVLSLAYEAYDSMALKEMNKICSDLRSKWLDLKHIVIYHRLGTVPVCEASVVIAASSPHRSEALESVSFAIDQLKTRVPIWKKEIYDGDNDSEWKENKESIRPKKSKSGFNYAACPCKVEESHDVPRTLVQIRVNDAELTKRLECFVNRKRDEINSQNVIDFKSSFVSSDQNLSDSCARTQSTIIKQEQSNCHLKVRRVNNRCGPQQMEMRPNYELELNKLMGSRDGQTDPTKEMRKSLPNSRLQAIESYMGLTTDNEENIFSRIKRVENRLLQLESISPEYRHFTKREPSSMEAAPPKKSRKKSYSAQELSAFIQKIKDGSELS.

Substrate is bound by residues 101–102 (HR), Lys-117, and 124–126 (KKE). The disordered stretch occupies residues 325–350 (RHFTKREPSSMEAAPPKKSRKKSYSA).

This sequence belongs to the MoaE family. MOCS2B subfamily. Heterotetramer; composed of 2 small (Mocs2A) and 2 large (Mocs2B) subunits. Component of the Ada2a-containing (ATAC) complex composed of at least Ada2a, Atac1, Hcf, Ada3, Gcn5, Mocs2B, Charac-14, Atac3, Atac2, NC2beta and wds.

The protein resides in the cytoplasm. Its subcellular location is the nucleus. It catalyses the reaction 2 [molybdopterin-synthase sulfur-carrier protein]-C-terminal-Gly-aminoethanethioate + cyclic pyranopterin phosphate + H2O = molybdopterin + 2 [molybdopterin-synthase sulfur-carrier protein]-C-terminal Gly-Gly + 2 H(+). The protein operates within cofactor biosynthesis; molybdopterin biosynthesis. Functionally, catalytic subunit of the molybdopterin synthase complex, a complex that catalyzes the conversion of precursor Z into molybdopterin. Acts by mediating the incorporation of 2 sulfur atoms from thiocarboxylated Mocs2A into precursor Z to generate a dithiolene group. Involved during biosynthesis of the molybdenum cofactor. The protein is Molybdopterin synthase catalytic subunit of Drosophila melanogaster (Fruit fly).